The sequence spans 291 residues: 4,5:9,10-diseco-3-hydroxy-5,9,17-trioxoandrosta-1(10),2-diene-4-oate hydrolase (291 aa).

Residues 45–46, Asn-54, Asn-113, Leu-115, and Arg-192 contribute to the substrate site; that span reads GG. His-269 (proton acceptor) is an active-site residue. Trp-270 is a binding site for substrate.

Belongs to the AB hydrolase superfamily. HsaD family. As to quaternary structure, homodimer.

The catalysed reaction is (1E,2Z)-3-hydroxy-5,9,17-trioxo-4,5:9,10-disecoandrosta-1(10),2-dien-4-oate + H2O = 3-[(3aS,4S,7aS)-7a-methyl-1,5-dioxo-octahydro-1H-inden-4-yl]propanoate + (2Z,4Z)-2-hydroxyhexa-2,4-dienoate + H(+). It catalyses the reaction 2,6-dioxo-6-phenylhexa-3-enoate + H2O = 2-oxopent-4-enoate + benzoate + H(+). Its pathway is lipid metabolism; steroid biosynthesis. In terms of biological role, catalyzes the hydrolysis of a carbon-carbon bond in 4,5: 9,10-diseco-3-hydroxy-5,9,17-trioxoandrosta-1(10),2-diene-4-oate (4,9-DSHA) to yield 9,17-dioxo-1,2,3,4,10,19-hexanorandrostan-5-oate (DOHNAA) and 2-hydroxy-hexa-2,4-dienoate (HHD). Is also able to catalyze the hydrolysis of 2-hydroxy-6-oxo-6-phenylhexa-2,4-dienoic acid (HOPDA) and the synthetic analog 8-(2-chlorophenyl)-2-hydroxy-5-methyl-6-oxoocta-2,4-dienoic acid (HOPODA). This chain is 4,5:9,10-diseco-3-hydroxy-5,9,17-trioxoandrosta-1(10),2-diene-4-oate hydrolase (hsaD), found in Mycobacterium tuberculosis (strain ATCC 25618 / H37Rv).